Reading from the N-terminus, the 347-residue chain is Large ribosomal subunit protein uL3 (347 aa).

The segment at 325-347 is disordered; the sequence is RPPKKKPPVERPQITYISRESKQ.

The protein belongs to the universal ribosomal protein uL3 family. In terms of assembly, part of the 50S ribosomal subunit. Forms a cluster with proteins L14 and L24e.

Its function is as follows. One of the primary rRNA binding proteins, it binds directly near the 3'-end of the 23S rRNA, where it nucleates assembly of the 50S subunit. This is Large ribosomal subunit protein uL3 from Thermococcus onnurineus (strain NA1).